The primary structure comprises 106 residues: Phosphoribosyl-ATP pyrophosphatase (106 aa).

This sequence belongs to the PRA-PH family.

It localises to the cytoplasm. It catalyses the reaction 1-(5-phospho-beta-D-ribosyl)-ATP + H2O = 1-(5-phospho-beta-D-ribosyl)-5'-AMP + diphosphate + H(+). It participates in amino-acid biosynthesis; L-histidine biosynthesis; L-histidine from 5-phospho-alpha-D-ribose 1-diphosphate: step 2/9. This Limosilactobacillus fermentum (strain NBRC 3956 / LMG 18251) (Lactobacillus fermentum) protein is Phosphoribosyl-ATP pyrophosphatase.